The primary structure comprises 205 residues: Fibroblast growth factor homolog (205 aa).

A signal peptide spans 1-17; sequence MHRLALVVATVAYLCAG.

The protein belongs to the heparin-binding growth factors family.

In Orgyia pseudotsugata multicapsid polyhedrosis virus (OpMNPV), this protein is Fibroblast growth factor homolog (FGF).